Reading from the N-terminus, the 420-residue chain is UDP-N-acetyl-D-mannosamine dehydrogenase (420 aa).

NAD(+) is bound by residues Tyr13, Ile14, Asp33, Thr85, and Thr126. UDP-N-acetyl-alpha-D-mannosaminouronate-binding residues include Arg160, Val161, Lys212, Asn216, Arg219, His250, Arg252, and Gly263. The active-site Proton donor/acceptor is Lys212. The active-site Nucleophile is the Cys266. The UDP-N-acetyl-alpha-D-mannosaminouronate site is built by Phe330 and Lys331. Arg338 is a binding site for NAD(+). Lys416 contacts UDP-N-acetyl-alpha-D-mannosaminouronate.

It belongs to the UDP-glucose/GDP-mannose dehydrogenase family. WecC subfamily. As to quaternary structure, homodimer.

The enzyme catalyses UDP-N-acetyl-alpha-D-mannosamine + 2 NAD(+) + H2O = UDP-N-acetyl-alpha-D-mannosaminouronate + 2 NADH + 3 H(+). It functions in the pathway bacterial outer membrane biogenesis; enterobacterial common antigen biosynthesis. In terms of biological role, catalyzes the four-electron oxidation of UDP-N-acetyl-D-mannosamine (UDP-ManNAc), reducing NAD(+) and releasing UDP-N-acetylmannosaminuronic acid (UDP-ManNAcA). The chain is UDP-N-acetyl-D-mannosamine dehydrogenase from Salmonella typhi.